Reading from the N-terminus, the 350-residue chain is Methylthioribose-1-phosphate isomerase (350 aa).

Residues 47 to 49 (RGA), arginine 90, and glutamine 197 contribute to the substrate site. The active-site Proton donor is the aspartate 238. 248-249 (NK) lines the substrate pocket.

The protein belongs to the eIF-2B alpha/beta/delta subunits family. MtnA subfamily.

The enzyme catalyses 5-(methylsulfanyl)-alpha-D-ribose 1-phosphate = 5-(methylsulfanyl)-D-ribulose 1-phosphate. It functions in the pathway amino-acid biosynthesis; L-methionine biosynthesis via salvage pathway; L-methionine from S-methyl-5-thio-alpha-D-ribose 1-phosphate: step 1/6. Catalyzes the interconversion of methylthioribose-1-phosphate (MTR-1-P) into methylthioribulose-1-phosphate (MTRu-1-P). In Nitratidesulfovibrio vulgaris (strain DP4) (Desulfovibrio vulgaris), this protein is Methylthioribose-1-phosphate isomerase.